A 392-amino-acid chain; its full sequence is Probable tRNA sulfurtransferase (392 aa).

In terms of domain architecture, THUMP spans 59–166 (SCYREALKRV…DEGLFIYTTE (108 aa)). Residues 186-187 (LL), 211-212 (YF), Arg-269, Gly-290, and Gln-299 each bind ATP.

This sequence belongs to the ThiI family.

It is found in the cytoplasm. It catalyses the reaction [ThiI sulfur-carrier protein]-S-sulfanyl-L-cysteine + a uridine in tRNA + 2 reduced [2Fe-2S]-[ferredoxin] + ATP + H(+) = [ThiI sulfur-carrier protein]-L-cysteine + a 4-thiouridine in tRNA + 2 oxidized [2Fe-2S]-[ferredoxin] + AMP + diphosphate. The catalysed reaction is [ThiS sulfur-carrier protein]-C-terminal Gly-Gly-AMP + S-sulfanyl-L-cysteinyl-[cysteine desulfurase] + AH2 = [ThiS sulfur-carrier protein]-C-terminal-Gly-aminoethanethioate + L-cysteinyl-[cysteine desulfurase] + A + AMP + 2 H(+). It participates in cofactor biosynthesis; thiamine diphosphate biosynthesis. Its function is as follows. Catalyzes the ATP-dependent transfer of a sulfur to tRNA to produce 4-thiouridine in position 8 of tRNAs, which functions as a near-UV photosensor. Also catalyzes the transfer of sulfur to the sulfur carrier protein ThiS, forming ThiS-thiocarboxylate. This is a step in the synthesis of thiazole, in the thiamine biosynthesis pathway. The sulfur is donated as persulfide by IscS. This Coxiella burnetii (strain RSA 493 / Nine Mile phase I) protein is Probable tRNA sulfurtransferase.